A 335-amino-acid polypeptide reads, in one-letter code: MMSEPVRVGLNGFGRIGRNVFRASLHSDDVEIVGINDVMDDSEIDYFAQYDSVMGELEGASVDDGVLTVDGTDFEAGIFHETDPTQLPWDDLDVDVAFEATGIFRTKEDASQHLDAGADKVLISAPPKGDEPVKQLVYGVNHDEYDGEDVVSNASCTTNSITPVAKVLDEEFGINAGQLTTVHAYTGSQNLMDGPNGKPRRRRAAAENIIPTSTGAAQAATEVLPELEGKLDGMAIRVPVPNGSITEFVVDLDDDVTESDVNAAFEDAAAGELEGVLGVTSDDVVSSDILGDPYSTQVDLQSTNVVSGMTKILTWYDNEYGFSNRMLDVAEYITE.

Residues 15–16 and D37 contribute to the NAD(+) site; that span reads RI. Residues 155-157, T186, R201, 214-215, and R237 each bind D-glyceraldehyde 3-phosphate; these read SCT and TG. The Nucleophile role is filled by C156. Positions 301 and 318 each coordinate NAD(+).

The protein belongs to the glyceraldehyde-3-phosphate dehydrogenase family. In terms of assembly, homotetramer.

The protein localises to the cytoplasm. It carries out the reaction D-glyceraldehyde 3-phosphate + phosphate + NADP(+) = (2R)-3-phospho-glyceroyl phosphate + NADPH + H(+). It catalyses the reaction D-glyceraldehyde 3-phosphate + phosphate + NAD(+) = (2R)-3-phospho-glyceroyl phosphate + NADH + H(+). Its pathway is carbohydrate degradation; glycolysis; pyruvate from D-glyceraldehyde 3-phosphate: step 1/5. This Haloarcula vallismortis (Halobacterium vallismortis) protein is Glyceraldehyde-3-phosphate dehydrogenase (gap).